A 395-amino-acid chain; its full sequence is Chorismate synthase (395 aa).

Arg-48 is a binding site for NADP(+). 125–127 (RSS) provides a ligand contact to FMN. Residues 264-292 (RNEDWTFDDGESFDHVESEEGDPVPVGND) are disordered. Residues Gly-298, 313 to 317 (HAPTS), and Arg-340 each bind FMN. The tract at residues 373–395 (PDRVDGNPGQYDTDYHPSSPDND) is disordered.

The protein belongs to the chorismate synthase family. The cofactor is FMNH2.

It carries out the reaction 5-O-(1-carboxyvinyl)-3-phosphoshikimate = chorismate + phosphate. It participates in metabolic intermediate biosynthesis; chorismate biosynthesis; chorismate from D-erythrose 4-phosphate and phosphoenolpyruvate: step 7/7. Catalyzes the anti-1,4-elimination of the C-3 phosphate and the C-6 proR hydrogen from 5-enolpyruvylshikimate-3-phosphate (EPSP) to yield chorismate, which is the branch point compound that serves as the starting substrate for the three terminal pathways of aromatic amino acid biosynthesis. This reaction introduces a second double bond into the aromatic ring system. The protein is Chorismate synthase of Halorubrum lacusprofundi (strain ATCC 49239 / DSM 5036 / JCM 8891 / ACAM 34).